The primary structure comprises 53 residues: Large ribosomal subunit protein bL33 (53 aa).

It belongs to the bacterial ribosomal protein bL33 family.

The sequence is that of Large ribosomal subunit protein bL33 from Blochmanniella floridana.